The primary structure comprises 508 residues: Monocarboxylate transporter 9 (508 aa).

The Cytoplasmic portion of the chain corresponds to 1 to 12; it reads MEFQKSPDGGWG. Transmembrane regions (helical) follow at residues 13–33, 53–73, 80–100, 102–122, 137–157, 164–184, 303–323, 341–361, 370–390, 396–416, 431–451, and 460–480; these read WVIV…PLAV, WVGS…SLFV, PVTI…SLAP, IYFL…LLYT, GLAL…YAAL, FYGL…ILAC, VFSA…PPSL, MPLI…LGIL, LYLY…IPFA, LAIL…FPYV, GILM…VGWF, and IAFY…LLAI. The Cytoplasmic segment spans residues 481 to 508; that stretch reads LPCWDMCNKKLPKPAVPTTFFYKVASNV.

The protein belongs to the major facilitator superfamily. Monocarboxylate porter (TC 2.A.1.13) family.

Its subcellular location is the cell membrane. It catalyses the reaction creatine(in) = creatine(out). The catalysed reaction is (R)-carnitine(in) = (R)-carnitine(out). Its function is as follows. Extracellular pH-and Na(+)-sensitive low-affinity creatine transporter. Also functions as a pH-independent carnitine efflux transporter. This chain is Monocarboxylate transporter 9 (Slc16a9), found in Mus musculus (Mouse).